The primary structure comprises 1115 residues: G-protein coupled receptor GRL101 (1115 aa).

An N-terminal signal peptide occupies residues 1–24 (MATMSGTTIVCLIYLTTMLGNSQG). Residues 25–767 (VNLKIESPSP…SCEDLMSNHV (743 aa)) are Extracellular-facing. LDL-receptor class A domains lie at 36–79 (TLCS…TCGC), 77–115 (CGCL…ECDI), 116–155 (YICP…ICER), 156–196 (RECV…ACDS), 195–232 (DSDK…NCKL), 231–269 (KLCD…VCAN), 272–318 (YGCP…YCSN), 320–363 (SECK…SCLA), 365–403 (PKCS…NCEN), 404–442 (HQCA…DCDP), 444–485 (PVCE…NCSQ), and 486–525 (HICL…NCRY). 16 disulfide bridges follow: Cys38/Cys53, Cys46/Cys66, Cys60/Cys77, Cys79/Cys91, Cys86/Cys104, Cys98/Cys113, Cys118/Cys131, Cys138/Cys153, Cys158/Cys170, Cys165/Cys183, Cys177/Cys194, Cys202/Cys220, Cys214/Cys230, Cys233/Cys245, Cys240/Cys258, and Cys252/Cys267. Asn87 is a glycosylation site (N-linked (GlcNAc...) asparagine). A glycan (N-linked (GlcNAc...) asparagine) is linked at Asn166. N-linked (GlcNAc...) asparagine glycosylation occurs at Asn269. Cystine bridges form between Cys274–Cys291, Cys282–Cys304, and Cys298–Cys316. Residue Asn318 is glycosylated (N-linked (GlcNAc...) asparagine). 15 disulfides stabilise this stretch: Cys322/Cys339, Cys334/Cys352, Cys346/Cys361, Cys367/Cys379, Cys374/Cys392, Cys386/Cys401, Cys406/Cys418, Cys413/Cys431, Cys425/Cys440, Cys446/Cys458, Cys453/Cys474, Cys465/Cys483, Cys488/Cys500, Cys495/Cys513, and Cys507/Cys523. N-linked (GlcNAc...) asparagine glycosylation occurs at Asn482. The N-linked (GlcNAc...) asparagine glycan is linked to Asn502. The 45-residue stretch at 518-562 (WDENNCRYWCPHGQAICQCEGVTMDCTGQKLKEMPVQQMEEDLSK) folds into the LRRNT domain. N-linked (GlcNAc...) asparagine glycosylation occurs at Asn571. LRR repeat units follow at residues 584-605 (KVTY…SFQN), 608-629 (KLTH…SLLG), 632-653 (NLKQ…TFSS), 656-677 (HLTV…MFKG), 680-701 (QITV…AFNN), and 704-725 (NVRL…VFMG). Residues Asn618 and Asn624 are each glycosylated (N-linked (GlcNAc...) asparagine). A glycan (N-linked (GlcNAc...) asparagine) is linked at Asn685. A helical transmembrane segment spans residues 768 to 788 (LRVSIWVLGVIALVGNFVVIF). The Cytoplasmic portion of the chain corresponds to 789–801 (WRVRDFRGGKVHS). The helical transmembrane segment at 802–822 (FLITNLAIGDFLMGVYLLIIA) threads the bilayer. Residues 823 to 857 (TADTYYRGVYISHDENWKQSGLCQFAGFVSTFSSE) are Extracellular-facing. Residues 858–878 (LSVLTLSTITLDRLICILFPL) traverse the membrane as a helical segment. The Cytoplasmic segment spans residues 879–887 (RRTRLGLRQ). The helical transmembrane segment at 888-908 (AIIVMSCIWVLVFLLAVLPLL) threads the bilayer. The Extracellular segment spans residues 909–941 (GFSYFENFYGRSGVCLALHVTPDRRPGWEYSVG). The chain crosses the membrane as a helical span at residues 942–962 (VFILLNLLSFVLIASSYLWMF). Residues 963–988 (SVAKKTRSAVRTAESKNDNAMARRMT) lie on the Cytoplasmic side of the membrane. A helical transmembrane segment spans residues 989 to 1009 (LIVMTDFCCWVPIIVLGFVSL). The Extracellular segment spans residues 1010–1017 (AGARADDQ). A helical transmembrane segment spans residues 1018 to 1038 (VYAWIAVFVLPLNSATNPVIY). Over 1039 to 1115 (TLSTAPFLGN…YYNTELHSDS (77 aa)) the chain is Cytoplasmic.

Belongs to the G-protein coupled receptor 1 family. As to expression, predominantly expressed in a small number of neurons within the central nervous system and to a lesser extent in the heart.

The protein resides in the cell membrane. Its function is as follows. Might directly transduce signals carried by large extracellular lipoprotein complexes into neuronal events. This chain is G-protein coupled receptor GRL101, found in Lymnaea stagnalis (Great pond snail).